The following is a 358-amino-acid chain: Protein RecA (358 aa).

66–73 (GPESSGKT) serves as a coordination point for ATP.

It belongs to the RecA family.

It is found in the cytoplasm. Its function is as follows. Can catalyze the hydrolysis of ATP in the presence of single-stranded DNA, the ATP-dependent uptake of single-stranded DNA by duplex DNA, and the ATP-dependent hybridization of homologous single-stranded DNAs. It interacts with LexA causing its activation and leading to its autocatalytic cleavage. The sequence is that of Protein RecA from Herpetosiphon aurantiacus (strain ATCC 23779 / DSM 785 / 114-95).